We begin with the raw amino-acid sequence, 599 residues long: Leucine zipper putative tumor suppressor 1 (599 aa).

G2 is lipidated: N-myristoyl glycine. Disordered regions lie at residues 135–190 and 288–324; these read GAIL…TTSS and EFAS…KSQR. A compositionally biased stretch (basic and acidic residues) spans 153–162; the sequence is PPDKPKEQEL. Positions 174–190 are enriched in polar residues; the sequence is SGRNSMSSLPTHSTTSS. Residues 256–572 are a coiled coil; it reads LSTDECTIQE…LEKALQQLAR (317 aa). Positions 288-313 are enriched in basic and acidic residues; the sequence is EFASGQTFEERPRRTRDELECLEPKS.

It belongs to the LZTS family. In terms of assembly, binds EEF1G, TLK2 and CDK1. In terms of processing, phosphorylated on serine residues. Hyperphosphorylated by the cAMP-dependent kinase PKA during cell-cycle progression.

It is found in the cytoplasm. The protein localises to the cell membrane. Its subcellular location is the cell projection. The protein resides in the dendritic spine. It localises to the postsynaptic density. It is found in the synapse. Involved in the regulation of cell growth. May stabilize the active CDC2-cyclin B1 complex and thereby contribute to the regulation of the cell cycle and the prevention of uncontrolled cell proliferation. May act as tumor suppressor. The protein is Leucine zipper putative tumor suppressor 1 (Lzts1) of Mus musculus (Mouse).